The chain runs to 1361 residues: Rho guanine nucleotide exchange factor 18 (1361 aa).

Disordered regions lie at residues 33 to 88, 131 to 156, and 244 to 292; these read LQDL…SCSE, SGGGTPAESPGKECDSPKKRGRSRSV, and DGAG…ARER. Residues 50–61 show a composition bias toward basic and acidic residues; it reads PDSRPTGEEPGR. Polar residues predominate over residues 64–73; sequence LFSSLAGSQD. Over residues 74 to 88 the composition is skewed to basic and acidic residues; it reads LSRRRSWERSRSCSE. Basic and acidic residues-rich tracts occupy residues 245 to 256 and 271 to 292; these read GAGKNEKSDKST and RQKEKGKSPAHLKDKGQDARER. The C2H2-type; degenerate zinc-finger motif lies at 310-334; that stretch reads SSCPLCGKPFLSSASLKEHPRGTLL. Residues 348 to 368 are disordered; it reads TVSQKGGPQPTPSPAGPGTQL. The DH domain maps to 447–644; it reads KRQDVLYELM…KDIISQVDAK (198 aa). Residues 684–786 form the PH domain; the sequence is QLHLEGMLCW…WMAHIQRAVE (103 aa). 4 disordered regions span residues 893–980, 1143–1211, 1229–1264, and 1277–1361; these read ANGQ…DPRL, LKKQ…RLAK, AAVQQQIPTKLAASTKGGKDKGGKSRGSQRWESSAS, and MGKD…VIFF. Residue T912 is modified to Phosphothreonine. S921 is modified (phosphoserine). Positions 1038 to 1148 form a coiled coil; the sequence is LEQERQRNFE…LLRRLKKQNT (111 aa). Residues 1191 to 1211 show a composition bias toward basic and acidic residues; that stretch reads YAERPEVARRDSAPTENRLAK. Over residues 1254–1264 the composition is skewed to polar residues; sequence RGSQRWESSAS. 2 positions are modified to phosphoserine: S1289 and S1291. Composition is skewed to pro residues over residues 1300–1317 and 1334–1344; these read PAPPPDPGFPAPSPPPAD and PGPPAPSPLPA. The span at 1349–1361 shows a compositional bias: basic and acidic residues; it reads AKEDASKEDVIFF.

In terms of assembly, interacts with SEPT9; the interaction may inhibit GEF activity. Interacts with Gbetagamma subunits GNB1 and GNG2. Interacts with EPB41L4B. Interacts with PATJ (via C-terminus). As to expression, expressed in all tissues tested with highest expression in kidney and pancreas. Weakly or not expressed in liver, skeletal muscle and testis. Isoform 1: Expressed in eosinophils. Isoform 2: Expressed in eosinophils. Isoform 3: Expressed in eosinophils. Isoform 4: Not detected in eosinophils.

The protein resides in the cytoplasm. Its subcellular location is the cytoskeleton. It is found in the cell membrane. The protein localises to the apical cell membrane. Its function is as follows. Acts as a guanine nucleotide exchange factor (GEF) for RhoA GTPases. Its activation induces formation of actin stress fibers. Also acts as a GEF for RAC1, inducing production of reactive oxygen species (ROS). Does not act as a GEF for CDC42. The G protein beta-gamma (Gbetagamma) subunits of heterotrimeric G proteins act as activators, explaining the integrated effects of LPA and other G-protein coupled receptor agonists on actin stress fiber formation, cell shape change and ROS production. Required for EPB41L4B-mediated regulation of the circumferential actomyosin belt in epithelial cells. The polypeptide is Rho guanine nucleotide exchange factor 18 (ARHGEF18) (Homo sapiens (Human)).